The chain runs to 443 residues: Chromosomal replication initiator protein DnaA (443 aa).

The domain I, interacts with DnaA modulators stretch occupies residues 1–73 (MYGDHRQIWE…YDAASKATNK (73 aa)). A domain II region spans residues 73-106 (KLYEIKILSEDEEEYREIKESIEKENLTESTTLS). Residues 107–323 (TLNPKYTFDT…GALIRIVAFS (217 aa)) are domain III, AAA+ region. ATP contacts are provided by G151, G153, K154, and T155. The domain IV, binds dsDNA stretch occupies residues 324-443 (NLTKANIDLE…EELKKRIKGY (120 aa)).

It belongs to the DnaA family. As to quaternary structure, oligomerizes as a right-handed, spiral filament on DNA at oriC.

Its subcellular location is the cytoplasm. Plays an essential role in the initiation and regulation of chromosomal replication. ATP-DnaA binds to the origin of replication (oriC) to initiate formation of the DNA replication initiation complex once per cell cycle. Binds the DnaA box (a 9 base pair repeat at the origin) and separates the double-stranded (ds)DNA. Forms a right-handed helical filament on oriC DNA; dsDNA binds to the exterior of the filament while single-stranded (ss)DNA is stabiized in the filament's interior. The ATP-DnaA-oriC complex binds and stabilizes one strand of the AT-rich DNA unwinding element (DUE), permitting loading of DNA polymerase. After initiation quickly degrades to an ADP-DnaA complex that is not apt for DNA replication. Binds acidic phospholipids. This chain is Chromosomal replication initiator protein DnaA, found in Thermoanaerobacter pseudethanolicus (strain ATCC 33223 / 39E) (Clostridium thermohydrosulfuricum).